The chain runs to 713 residues: Polyribonucleotide nucleotidyltransferase (713 aa).

Mg(2+) contacts are provided by Asp-488 and Asp-494. The KH domain occupies 555 to 614 (PQMEIIKVPTDKIRDVIGSGGKVIRGIVDETGAKVNIDDDGTVQISAMDRKSIDAAIKMI). The S1 motif domain occupies 624-692 (GEIYEGKVVS…ERGKVRLSMK (69 aa)).

This sequence belongs to the polyribonucleotide nucleotidyltransferase family. It depends on Mg(2+) as a cofactor.

The protein resides in the cytoplasm. It catalyses the reaction RNA(n+1) + phosphate = RNA(n) + a ribonucleoside 5'-diphosphate. Functionally, involved in mRNA degradation. Catalyzes the phosphorolysis of single-stranded polyribonucleotides processively in the 3'- to 5'-direction. The protein is Polyribonucleotide nucleotidyltransferase of Hyphomonas neptunium (strain ATCC 15444).